Consider the following 430-residue polypeptide: 3-deoxy-D-manno-octulosonic acid transferase (430 aa).

The chain crosses the membrane as a helical; Signal-anchor span at residues 12-32; sequence AFLVAAFLAAAPRIFYKVVFH. Glu-66 (proton acceptor) is an active-site residue. CMP-binding positions include 274-275, 314-316, and 341-344; these read PR, MGI, and NLLE.

This sequence belongs to the glycosyltransferase group 1 family. Glycosyltransferase 30 subfamily.

It is found in the cell inner membrane. It catalyses the reaction lipid IVA (E. coli) + CMP-3-deoxy-beta-D-manno-octulosonate = alpha-Kdo-(2-&gt;6)-lipid IVA (E. coli) + CMP + H(+). It carries out the reaction alpha-Kdo-(2-&gt;6)-lipid IVA (E. coli) + CMP-3-deoxy-beta-D-manno-octulosonate = alpha-Kdo-(2-&gt;4)-alpha-Kdo-(2-&gt;6)-lipid IVA (E. coli) + CMP + H(+). The catalysed reaction is alpha-Kdo-(2-&gt;4)-alpha-Kdo-(2-&gt;6)-lipid IVA (E. coli) + CMP-3-deoxy-beta-D-manno-octulosonate = alpha-Kdo-(2-&gt;8)-alpha-Kdo-(2-&gt;4)-alpha-Kdo-(2-&gt;6)-lipid IVA (E. coli) + CMP + H(+). It participates in bacterial outer membrane biogenesis; LPS core biosynthesis. Functionally, involved in lipopolysaccharide (LPS) biosynthesis. Catalyzes the transfer of three 3-deoxy-D-manno-octulosonate (Kdo) residues from CMP-Kdo to lipid IV(A), the tetraacyldisaccharide-1,4'-bisphosphate precursor of lipid A. Thus generates the genus-specific LPS epitope of Chlamydia, composed of the trisaccharide alpha-Kdo-(2-&gt;8)-alpha-Kdo-(2-&gt;4)-alpha-Kdo. In Chlamydia muridarum (strain MoPn / Nigg), this protein is 3-deoxy-D-manno-octulosonic acid transferase (waaA).